The chain runs to 492 residues: Probable protein phosphatase 2C 33 (492 aa).

The segment at 1-46 (MGSCLSAESRSPRPGSPCSPAFSVRKRKNSKKRPGSRNSSFDYRRE) is disordered. Basic residues predominate over residues 24-35 (VRKRKNSKKRPG). The PPM-type phosphatase domain maps to 64-393 (VACIYTQQGK…DDCAAVCLYL (330 aa)). 4 residues coordinate Mn(2+): D100, G101, D338, and D384. A disordered region spans residues 406-468 (SISKLEDGEE…ADNLDSEPGT (63 aa)). Over residues 412-427 (DGEEEELKATTEDDDA) the composition is skewed to acidic residues. Residues 441–460 (SGKEIALDESETEKLIKEAD) show a composition bias toward basic and acidic residues.

It belongs to the PP2C family. Mg(2+) serves as cofactor. The cofactor is Mn(2+).

It catalyses the reaction O-phospho-L-seryl-[protein] + H2O = L-seryl-[protein] + phosphate. The catalysed reaction is O-phospho-L-threonyl-[protein] + H2O = L-threonyl-[protein] + phosphate. This Arabidopsis thaliana (Mouse-ear cress) protein is Probable protein phosphatase 2C 33 (PPC6-1).